The sequence spans 341 residues: Solute carrier family 25 member 43 (341 aa).

Solcar repeat units follow at residues 11–101 (TGSQ…MDDL), 105–185 (SQWS…LLVY), and 200–298 (SHLQ…LYQN). Transmembrane regions (helical) follow at residues 16-36 (LLCA…LELA), 68-88 (LWKG…VQLA), 110-130 (IVTG…TDLI), 166-186 (GVSL…LVYM), 205-225 (FANV…FDTV), and 262-282 (VLGL…YFGV).

It belongs to the mitochondrial carrier (TC 2.A.29) family.

Its subcellular location is the mitochondrion inner membrane. This is Solute carrier family 25 member 43 (Slc25a43) from Mus musculus (Mouse).